Reading from the N-terminus, the 364-residue chain is Caffeic acid 3-O-methyltransferase (364 aa).

Methionine 131–leucine 137 serves as a coordination point for substrate. A substrate binding region spans residues alanine 163 to methionine 181. The S-adenosyl-L-methionine site is built by glycine 209, aspartate 232, aspartate 252, methionine 253, and lysine 266. Histidine 270 (proton acceptor) is an active-site residue.

It belongs to the class I-like SAM-binding methyltransferase superfamily. Cation-independent O-methyltransferase family. COMT subfamily. Homodimer. Confined to the vascular tissues of organs undergoing lignification such as stems and roots.

It carries out the reaction (E)-caffeate + S-adenosyl-L-methionine = (E)-ferulate + S-adenosyl-L-homocysteine + H(+). The enzyme catalyses tricetin + 2 S-adenosyl-L-methionine = 3',5'-di-O-methyltricetin + 2 S-adenosyl-L-homocysteine + 2 H(+). It catalyses the reaction luteolin + S-adenosyl-L-methionine = chrysoeriol + S-adenosyl-L-homocysteine + H(+). The catalysed reaction is tricetin + S-adenosyl-L-methionine = 3'-O-methyltricetin + S-adenosyl-L-homocysteine + H(+). It participates in aromatic compound metabolism; phenylpropanoid biosynthesis. Its function is as follows. Catalyzes the conversion of caffeic acid to ferulic acid and of 5-hydroxyferulic acid to sinapic acid. The resulting products may subsequently be converted to the corresponding alcohols that are incorporated into lignins. Can use the flavone tricetin (5,7,3',4',5'-pentahydroxyflavone) as the preferred substrate and give rise to its 3',5'-dimethyl derivative, tricin (3',5'-dimethoxy-5,7,4'-trihydroxyflavone), as the major product, and selgin to a lower extent. Tricin exhibits potential benefits for human health including relaxant effect on smooth muscle of intestinal tissues, antioxidant effect, antihistaminic activity, and growth inhibition of human malignant breast tumor cells and colon cancer cells. Can also use luteolin, quercetin and 5-hydroxyferulic acid (5HF) as substrates. This is Caffeic acid 3-O-methyltransferase from Zea mays (Maize).